The chain runs to 768 residues: Vitamin B12-dependent ribonucleoside-diphosphate reductase (768 aa).

The ATP-cone domain occupies 3-97 (KEVVKRDGTV…LYREKRRAIR (95 aa)). Residues Ser234, 249-250 (AC), Gly278, 432-436 (NPCGE), and 579-583 (PTGTI) contribute to the substrate site. Cysteines 250 and 445 form a disulfide. The active-site Proton acceptor is the Asn432. Catalysis depends on Cys434, which acts as the Cysteine radical intermediate. Glu436 acts as the Proton acceptor in catalysis.

It belongs to the ribonucleoside diphosphate reductase class-2 family. As to quaternary structure, monomer. Adenosylcob(III)alamin is required as a cofactor.

The enzyme catalyses a 2'-deoxyribonucleoside 5'-diphosphate + [thioredoxin]-disulfide + H2O = a ribonucleoside 5'-diphosphate + [thioredoxin]-dithiol. Functionally, provides the precursors necessary for DNA synthesis. Catalyzes the biosynthesis of deoxyribonucleotides from the corresponding ribonucleotides. In Thermoplasma acidophilum (strain ATCC 25905 / DSM 1728 / JCM 9062 / NBRC 15155 / AMRC-C165), this protein is Vitamin B12-dependent ribonucleoside-diphosphate reductase.